A 548-amino-acid chain; its full sequence is Putative F-box protein At1g33020 (548 aa).

Residues 4–53 (AENLDSIPTDLILEIFSRMSTKSIGRCRCVSKLWKSMLGHPYFTELFLTR) form the F-box domain. The interval 380–404 (KPISPPKQKPKPPSTETSSREDHQG) is disordered. Pro residues predominate over residues 382 to 392 (ISPPKQKPKPP).

The protein is Putative F-box protein At1g33020 of Arabidopsis thaliana (Mouse-ear cress).